Reading from the N-terminus, the 280-residue chain is Hematopoietically-expressed homeobox protein HHEX homolog (280 aa).

2 disordered regions span residues M1–P35 and R221–A280. Positions R165–K224 form a DNA-binding region, homeobox. Positions G232–R252 are enriched in basic and acidic residues.

The protein localises to the nucleus. Transcription factor that may play a central role in activating or maintaining gene expression in the vegetal pole. Part of a gene regulatory circuit with Erg and Tgif that operates early in mesoderm development. The sequence is that of Hematopoietically-expressed homeobox protein HHEX homolog from Patiria miniata (Bat star).